The chain runs to 312 residues: Small kinetochore-associated protein (312 aa).

Residues 1–13 (MATHKAEAQETDF) are compositionally biased toward basic and acidic residues. Disordered stretches follow at residues 1–32 (MATH…PSSR), 55–176 (LKRS…KDKN), and 221–242 (KGLN…DPTD). The segment covering 75-84 (RPTTMASSKT) has biased composition (polar residues). Composition is skewed to basic and acidic residues over residues 131-143 (DVTK…RENG) and 166-176 (QKPEEDLKDKN). The tract at residues 156–312 (IRSSYKPLSK…LEEMEQLLEM (157 aa)) is interaction with SPAG5. The stretch at 169-210 (EEDLKDKNELLEAVNKQLHQKLTETQGELKDLTQKVELLEKF) forms a coiled coil. A coiled-coil region spans residues 246–288 (LLETLKDELKLFNETAKKQMEELQALKVKLKLKEKERIQFLEQ).

As to quaternary structure, part of an astrin (SPAG5)-kinastrin (SKAP) complex containing KNSTRN, SPAG5, PLK1, DYNLL1 and SGO2. Interacts with SPAG5. Directly binds to microtubules, although at relatively low affinity. Interacts with CENPE; this interaction greatly favors microtubule-binding. Interacts with DSN1/MIS13; leading to localization to kinetochores. Interacts with MAPRE1/EB1; leading to localization to the microtubule plus ends. Interacts with PRPF19. Interacts with DYNLL1. Interacts with MAP4.

It is found in the nucleus. It localises to the chromosome. The protein localises to the centromere. Its subcellular location is the kinetochore. The protein resides in the cytoplasm. It is found in the cytoskeleton. It localises to the spindle pole. The protein localises to the microtubule organizing center. Essential component of the mitotic spindle required for faithful chromosome segregation and progression into anaphase. Promotes the metaphase-to-anaphase transition and is required for chromosome alignment, normal timing of sister chromatid segregation, and maintenance of spindle pole architecture. The astrin (SPAG5)-kinastrin (SKAP) complex promotes stable microtubule-kinetochore attachments. Required for kinetochore oscillations and dynamics of microtubule plus-ends during live cell mitosis, possibly by forming a link between spindle microtubule plus-ends and mitotic chromosomes to achieve faithful cell division. This is Small kinetochore-associated protein (Knstrn) from Rattus norvegicus (Rat).